A 20-amino-acid polypeptide reads, in one-letter code: Protein PR-L1 (20 aa).

The protein belongs to the BetVI family.

The polypeptide is Protein PR-L1 (Lupinus luteus (European yellow lupine)).